A 432-amino-acid polypeptide reads, in one-letter code: Pachytene checkpoint protein 2 homolog (432 aa).

Met-1 bears the N-acetylmethionine mark. 179–186 (GPPGTGKT) serves as a coordination point for ATP.

This sequence belongs to the AAA ATPase family. PCH2 subfamily. In terms of assembly, specifically interacts with the ligand binding domain of the thyroid receptor (TR). This interaction does not require the presence of thyroid hormone for its interaction. Interacts with HPV16 E1. Interacts with proteasome subunit PSMA8; to participate in meiosis progression during spermatogenesis.

Its function is as follows. Plays a key role in chromosome recombination and chromosome structure development during meiosis. Required at early steps in meiotic recombination that leads to non-crossovers pathways. Also needed for efficient completion of homologous synapsis by influencing crossover distribution along the chromosomes affecting both crossovers and non-crossovers pathways. Also required for development of higher-order chromosome structures and is needed for synaptonemal-complex formation. In males, required for efficient synapsis of the sex chromosomes and for sex body formation. Promotes early steps of the DNA double-strand breaks (DSBs) repair process upstream of the assembly of RAD51 complexes. Required for depletion of HORMAD1 and HORMAD2 from synapsed chromosomes. Plays a role in mitotic spindle assembly checkpoint (SAC) activation. The chain is Pachytene checkpoint protein 2 homolog (TRIP13) from Homo sapiens (Human).